We begin with the raw amino-acid sequence, 82 residues long: Turripeptide Gsg9.1 (82 aa).

The N-terminal stretch at 1-23 is a signal peptide; the sequence is MMAKLMITVMTVFFLSLQQGADG. Positions 24-46 are excised as a propeptide; it reads LFERWRKNQMAASRIMGNLITAR. 2 positions are modified to 4-hydroxyproline: P49 and P50. Cystine bridges form between C53-C68, C58-C72, and C64-C79. A 4-carboxyglutamate mark is found at E60 and E63.

The protein belongs to the Pg turripeptide superfamily. Expressed by the venom duct.

The protein localises to the secreted. The sequence is that of Turripeptide Gsg9.1 from Gemmula sogodensis (Gem-turris).